Reading from the N-terminus, the 411-residue chain is 4-coumarate--CoA ligase (411 aa).

Belongs to the ATP-dependent AMP-binding enzyme family.

The enzyme catalyses (E)-4-coumarate + ATP + CoA = (E)-4-coumaroyl-CoA + AMP + diphosphate. Functionally, converts p-coumaric acid into p-coumaryl CoA. This is necessary for the activation of the photoactive yellow protein (PYP) chromophore. The polypeptide is 4-coumarate--CoA ligase (pcl) (Cereibacter sphaeroides (strain ATCC 17023 / DSM 158 / JCM 6121 / CCUG 31486 / LMG 2827 / NBRC 12203 / NCIMB 8253 / ATH 2.4.1.) (Rhodobacter sphaeroides)).